The following is a 321-amino-acid chain: Malate dehydrogenase (321 aa).

NAD(+) contacts are provided by residues G10–G15 and D34. The substrate site is built by R83 and R89. Residues N96 and I119–N121 each bind NAD(+). Substrate contacts are provided by N121 and R152. H176 acts as the Proton acceptor in catalysis.

This sequence belongs to the LDH/MDH superfamily. MDH type 3 family.

The catalysed reaction is (S)-malate + NAD(+) = oxaloacetate + NADH + H(+). In terms of biological role, catalyzes the reversible oxidation of malate to oxaloacetate. The polypeptide is Malate dehydrogenase (Xanthobacter autotrophicus (strain ATCC BAA-1158 / Py2)).